The primary structure comprises 405 residues: Dihydrolipoyllysine-residue succinyltransferase component of 2-oxoglutarate dehydrogenase complex (405 aa).

Residues 3 to 78 form the Lipoyl-binding domain; sequence SVDILVPDLP…TSRQILGRLR (76 aa). Lysine 44 carries the N6-lipoyllysine modification. A disordered region spans residues 75-111; the sequence is GRLREGNSAGKETSAKSEEKASTPAQRQQASLEEQNN. Residues 97–111 show a composition bias toward polar residues; the sequence is TPAQRQQASLEEQNN. Residues 113–150 enclose the Peripheral subunit-binding (PSBD) domain; sequence ALSPAIRRLLAEHNLDASAIKGTGVGGRLTREDVEKHL. Position 148 is an N6-acetyllysine (lysine 148). A compositionally biased stretch (low complexity) spans 153–173; the sequence is APAKESAPAAAAPAAQPALAA. Residues 153–178 form a disordered region; the sequence is APAKESAPAAAAPAAQPALAARSEKR. Active-site residues include histidine 376 and aspartate 380.

Belongs to the 2-oxoacid dehydrogenase family. As to quaternary structure, forms a 24-polypeptide structural core with octahedral symmetry. Part of the 2-oxoglutarate dehydrogenase (OGDH) complex composed of E1 (2-oxoglutarate dehydrogenase), E2 (dihydrolipoamide succinyltransferase) and E3 (dihydrolipoamide dehydrogenase); the complex contains multiple copies of the three enzymatic components (E1, E2 and E3). Interacts with SucA (via N-terminus), the E1 component of OGDH complex. The cofactor is (R)-lipoate.

It catalyses the reaction N(6)-[(R)-dihydrolipoyl]-L-lysyl-[protein] + succinyl-CoA = N(6)-[(R)-S(8)-succinyldihydrolipoyl]-L-lysyl-[protein] + CoA. It functions in the pathway amino-acid degradation; L-lysine degradation via saccharopine pathway; glutaryl-CoA from L-lysine: step 6/6. Functionally, E2 component of the 2-oxoglutarate dehydrogenase (OGDH) complex which catalyzes the second step in the conversion of 2-oxoglutarate to succinyl-CoA and CO(2). This Escherichia coli O157:H7 protein is Dihydrolipoyllysine-residue succinyltransferase component of 2-oxoglutarate dehydrogenase complex (sucB).